Consider the following 162-residue polypeptide: ATP synthase subunit b', chloroplastic (162 aa).

Residues 26–46 (ATLPLQALQFILLTVLLTFIF) traverse the membrane as a helical segment.

The protein belongs to the ATPase B chain family. As to quaternary structure, F-type ATPases have 2 components, F(1) - the catalytic core - and F(0) - the membrane proton channel. F(1) has five subunits: alpha(3), beta(3), gamma(1), delta(1), epsilon(1). F(0) has four main subunits: a(1), b(1), b'(1) and c(10-14). The alpha and beta chains form an alternating ring which encloses part of the gamma chain. F(1) is attached to F(0) by a central stalk formed by the gamma and epsilon chains, while a peripheral stalk is formed by the delta, b and b' chains.

The protein resides in the plastid. It localises to the chloroplast thylakoid membrane. F(1)F(0) ATP synthase produces ATP from ADP in the presence of a proton or sodium gradient. F-type ATPases consist of two structural domains, F(1) containing the extramembraneous catalytic core and F(0) containing the membrane proton channel, linked together by a central stalk and a peripheral stalk. During catalysis, ATP synthesis in the catalytic domain of F(1) is coupled via a rotary mechanism of the central stalk subunits to proton translocation. Functionally, component of the F(0) channel, it forms part of the peripheral stalk, linking F(1) to F(0). The b'-subunit is a diverged and duplicated form of b found in plants and photosynthetic bacteria. The sequence is that of ATP synthase subunit b', chloroplastic from Emiliania huxleyi (Coccolithophore).